Consider the following 213-residue polypeptide: ATP-dependent Clp protease proteolytic subunit (213 aa).

Residue S114 is the Nucleophile of the active site. The active site involves H139.

It belongs to the peptidase S14 family. As to quaternary structure, fourteen ClpP subunits assemble into 2 heptameric rings which stack back to back to give a disk-like structure with a central cavity, resembling the structure of eukaryotic proteasomes.

The protein localises to the cytoplasm. The catalysed reaction is Hydrolysis of proteins to small peptides in the presence of ATP and magnesium. alpha-casein is the usual test substrate. In the absence of ATP, only oligopeptides shorter than five residues are hydrolyzed (such as succinyl-Leu-Tyr-|-NHMec, and Leu-Tyr-Leu-|-Tyr-Trp, in which cleavage of the -Tyr-|-Leu- and -Tyr-|-Trp bonds also occurs).. Functionally, cleaves peptides in various proteins in a process that requires ATP hydrolysis. Has a chymotrypsin-like activity. Plays a major role in the degradation of misfolded proteins. This chain is ATP-dependent Clp protease proteolytic subunit, found in Pseudomonas syringae pv. syringae (strain B728a).